We begin with the raw amino-acid sequence, 254 residues long: tRNA uridine(34) hydroxylase (254 aa).

Residues 123 to 217 enclose the Rhodanese domain; it reads QDPNVILLDT…YLESIPESES (95 aa). The active-site Cysteine persulfide intermediate is cysteine 177.

This sequence belongs to the TrhO family.

It catalyses the reaction uridine(34) in tRNA + AH2 + O2 = 5-hydroxyuridine(34) in tRNA + A + H2O. In terms of biological role, catalyzes oxygen-dependent 5-hydroxyuridine (ho5U) modification at position 34 in tRNAs. This chain is tRNA uridine(34) hydroxylase, found in Legionella pneumophila (strain Corby).